The following is a 141-amino-acid chain: ATP synthase epsilon chain, chloroplastic (141 aa).

This sequence belongs to the ATPase epsilon chain family. As to quaternary structure, F-type ATPases have 2 components, F(1) - the catalytic core - and F(0) - the membrane proton channel. F(1) has five subunits: alpha(3), beta(3), gamma(1), delta(1), epsilon(1). F(0) has four main subunits: a(1), b(1), b'(1) and c(10-14). The alpha and beta chains form an alternating ring which encloses part of the gamma chain. F(1) is attached to F(0) by a central stalk formed by the gamma and epsilon chains, while a peripheral stalk is formed by the delta, b and b' chains.

It is found in the plastid. Its subcellular location is the chloroplast thylakoid membrane. F(1)F(0) ATP synthase produces ATP from ADP in the presence of a proton or sodium gradient. F-type ATPases consist of two structural domains, F(1) containing the extramembraneous catalytic core and F(0) containing the membrane proton channel, linked together by a central stalk and a peripheral stalk. During catalysis, ATP synthesis in the catalytic domain of F(1) is coupled via a rotary mechanism of the central stalk subunits to proton translocation. The protein is ATP synthase epsilon chain, chloroplastic of Chlamydomonas reinhardtii (Chlamydomonas smithii).